The chain runs to 328 residues: E3 ubiquitin-protein ligase SINA-like 5 (328 aa).

The segment at 1–77 (MARSGGNDGH…GSPKSSQPVK (77 aa)) is disordered. 2 stretches are compositionally biased toward acidic residues: residues 10–20 (HEEELDPELFE) and 27–62 (GYED…ENVT). Residues 63-77 (TDEQSGSPKSSQPVK) show a composition bias toward polar residues. The RING-type; degenerate zinc finger occupies 86–122 (CPTCCEPLKRPIYQCSNGHLACSSCCQKLNKKCSFCR). The tract at residues 136 to 324 (VIEASIVPCP…MQICIAYGYK (189 aa)) is SBD. The SIAH-type; degenerate zinc finger occupies 139–197 (ASIVPCPNAKHGCKETTTYCNQSSHEKVCKFVRCSCPVSNCNYVSSYSNLKSHACSTAH). The Zn(2+) site is built by Cys144, Cys151, His163, Cys167, Cys174, Cys179, His191, and His197.

Belongs to the SINA (Seven in absentia) family.

It carries out the reaction S-ubiquitinyl-[E2 ubiquitin-conjugating enzyme]-L-cysteine + [acceptor protein]-L-lysine = [E2 ubiquitin-conjugating enzyme]-L-cysteine + N(6)-ubiquitinyl-[acceptor protein]-L-lysine.. It participates in protein modification; protein ubiquitination. In terms of biological role, E3 ubiquitin-protein ligase that mediates ubiquitination and subsequent proteasomal degradation of target proteins. E3 ubiquitin ligases accept ubiquitin from an E2 ubiquitin-conjugating enzyme in the form of a thioester and then directly transfers the ubiquitin to targeted substrates. It probably triggers the ubiquitin-mediated degradation of different substrates. The sequence is that of E3 ubiquitin-protein ligase SINA-like 5 from Arabidopsis thaliana (Mouse-ear cress).